The primary structure comprises 353 residues: Phenol 2-monooxygenase, reductase component DmpP (353 aa).

The region spanning 3–93 is the 2Fe-2S ferredoxin-type domain; sequence YNVTIEPTGE…DLVIEADVDA (91 aa). C37, C42, C45, and C77 together coordinate [2Fe-2S] cluster. The FAD-binding FR-type domain occupies 102–201; that stretch reads VEDYRGVVSA…SGPYGQFFVR (100 aa).

As to quaternary structure, the multicomponent enzyme phenol hydroxylase is formed by DmpL (P1 component), DmpM (P2 component), DmpN (P3 component), DmpO (P4 component) and DmpP (P5 component). It depends on FAD as a cofactor. [2Fe-2S] cluster is required as a cofactor.

The catalysed reaction is phenol + NADH + O2 + H(+) = catechol + NAD(+) + H2O. It functions in the pathway aromatic compound metabolism; phenol degradation. Part of a multicomponent enzyme which catalyzes the degradation of phenol and some of its methylated derivatives. DmpP probably transfers electrons from NADH, via FAD and the iron-sulfur center, to the oxygenase component of the complex. Required for growth on phenol and for in vitro phenol hydroxylase activity. The protein is Phenol 2-monooxygenase, reductase component DmpP of Pseudomonas sp. (strain CF600).